Consider the following 948-residue polypeptide: Protein translocase subunit SecA (948 aa).

ATP contacts are provided by residues Gln91, 109-113, and Asp509; that span reads GEGKT.

Belongs to the SecA family. In terms of assembly, monomer and homodimer. Part of the essential Sec protein translocation apparatus which comprises SecA, SecYEG and auxiliary proteins SecDF. Other proteins may also be involved.

The protein localises to the cell inner membrane. Its subcellular location is the cellular thylakoid membrane. It is found in the cytoplasm. The enzyme catalyses ATP + H2O + cellular proteinSide 1 = ADP + phosphate + cellular proteinSide 2.. Functionally, part of the Sec protein translocase complex. Interacts with the SecYEG preprotein conducting channel. Has a central role in coupling the hydrolysis of ATP to the transfer of proteins into and across the cell membrane, serving as an ATP-driven molecular motor driving the stepwise translocation of polypeptide chains across the membrane. Probably participates in protein translocation into and across both the cytoplasmic and thylakoid membranes in cyanobacterial cells. This Synechococcus elongatus (strain ATCC 33912 / PCC 7942 / FACHB-805) (Anacystis nidulans R2) protein is Protein translocase subunit SecA.